Reading from the N-terminus, the 835-residue chain is Neuroligin-2 (835 aa).

A signal peptide spans 1 to 14; sequence MWLLALCLVGLAGA. The Extracellular portion of the chain corresponds to 15-677; sequence QRGGGGPGGG…DSRDYSTELS (663 aa). 2 N-linked (GlcNAc...) asparagine glycosylation sites follow: asparagine 98 and asparagine 136. Cystine bridges form between cysteine 106–cysteine 141, cysteine 317–cysteine 328, and cysteine 487–cysteine 521. A glycan (N-linked (GlcNAc...) asparagine) is linked at asparagine 522. Positions 623 to 668 are disordered; the sequence is PPYATRWPPRPPAGAPGTRRPPPPATLPPEPEPEPGPRAYDRFPGD. Residues 630-658 are compositionally biased toward pro residues; it reads PPRPPAGAPGTRRPPPPATLPPEPEPEPG. The helical transmembrane segment at 678 to 698 threads the bilayer; sequence VTVAVGASLLFLNILAFAALY. The segment at 678-698 is required for interaction with LHFPL4; the sequence is VTVAVGASLLFLNILAFAALY. At 699–835 the chain is on the cytoplasmic side; it reads YKRDRRQELR…LPHPHSTTRV (137 aa). Serine 713 and serine 718 each carry phosphoserine. The segment at 790-835 is disordered; that stretch reads LLPSGLGPPPPPPPPSLHPFGPFPPPPPTATSHNNTLPHPHSTTRV. Residues 795–818 are compositionally biased toward pro residues; that stretch reads LGPPPPPPPPSLHPFGPFPPPPPT. Residues 823–835 are compositionally biased toward polar residues; the sequence is NNTLPHPHSTTRV.

Belongs to the type-B carboxylesterase/lipase family. As to quaternary structure, interacts with neurexins NRXN1, NRXN2 and NRXN3. Interaction with neurexins is mediated by heparan sulfate glycan modification on neurexin. Interacts (via its C-terminus) with DLG4/PSD-95 (via PDZ domain 3). Interacts with PATJ. Interacts with GPHN. Interacts with MDGA1 and MDGA2. Found in a complex with MAGI2 and IGSF9B, where it interacts with MAGI2 (via WW 1, WW 2 and PDZ 2 domains). Identified in a complex of 720 kDa composed of LHFPL4, NLGN2, GABRA1, GABRB2, GABRG2 and GABRB3. Interacts with LHFPL4; leading to mutual regulation of the protein level and synaptic clustering. Interacts with NLGN2. As to expression, expressed in the blood vessel walls. Detected in colon, brain and pancreas islets of Langerhans (at protein level). Detected in brain, and at lower levels in pancreas islet beta cells.

It localises to the cell membrane. Its subcellular location is the postsynaptic cell membrane. It is found in the presynaptic cell membrane. In terms of biological role, transmembrane scaffolding protein involved in cell-cell interactions via its interactions with neurexin family members. Mediates cell-cell interactions both in neurons and in other types of cells, such as Langerhans beta cells. Plays a role in synapse function and synaptic signal transmission, especially via gamma-aminobutyric acid receptors (GABA(A) receptors). Functions by recruiting and clustering synaptic proteins. Promotes clustering of postsynaptic GABRG2 and GPHN. Promotes clustering of postsynaptic LHFPL4. Modulates signaling by inhibitory synapses, and thereby plays a role in controlling the ratio of signaling by excitatory and inhibitory synapses and information processing. Required for normal signal amplitude from inhibitory synapses, but is not essential for normal signal frequency. May promote the initial formation of synapses, but is not essential for this. In vitro, triggers the de novo formation of presynaptic structures. Mediates cell-cell interactions between Langerhans beta cells and modulates insulin secretion. In Homo sapiens (Human), this protein is Neuroligin-2 (NLGN2).